The primary structure comprises 265 residues: NAD kinase (265 aa).

The Proton acceptor role is filled by D45. NAD(+) contacts are provided by residues 45-46 (DG), 121-122 (NE), R147, D149, A184, and Q221.

This sequence belongs to the NAD kinase family. A divalent metal cation serves as cofactor.

The protein resides in the cytoplasm. The enzyme catalyses NAD(+) + ATP = ADP + NADP(+) + H(+). In terms of biological role, involved in the regulation of the intracellular balance of NAD and NADP, and is a key enzyme in the biosynthesis of NADP. Catalyzes specifically the phosphorylation on 2'-hydroxyl of the adenosine moiety of NAD to yield NADP. The chain is NAD kinase from Leuconostoc citreum (strain KM20).